Reading from the N-terminus, the 133-residue chain is Small ribosomal subunit protein uS8c (133 aa).

This sequence belongs to the universal ribosomal protein uS8 family. In terms of assembly, part of the 30S ribosomal subunit.

The protein localises to the plastid. The protein resides in the chloroplast. Functionally, one of the primary rRNA binding proteins, it binds directly to 16S rRNA central domain where it helps coordinate assembly of the platform of the 30S subunit. The polypeptide is Small ribosomal subunit protein uS8c (rps8) (Pyropia yezoensis (Susabi-nori)).